The primary structure comprises 360 residues: Glyceraldehyde-3-phosphate dehydrogenase (360 aa).

Residues 13–14, Asp-35, and Arg-82 each bind NAD(+); that span reads RI. D-glyceraldehyde 3-phosphate contacts are provided by residues 153–155, Thr-184, 213–214, and Arg-236; these read SCT and TG. The active-site Nucleophile is the Cys-154. Asn-318 provides a ligand contact to NAD(+).

Belongs to the glyceraldehyde-3-phosphate dehydrogenase family. Homotetramer.

It carries out the reaction D-glyceraldehyde 3-phosphate + phosphate + NAD(+) = (2R)-3-phospho-glyceroyl phosphate + NADH + H(+). Its pathway is carbohydrate degradation; glycolysis; pyruvate from D-glyceraldehyde 3-phosphate: step 1/5. Functionally, key enzyme in glycolysis that catalyzes the first step of the pathway by converting D-glyceraldehyde 3-phosphate (G3P) into 3-phospho-D-glyceroyl phosphate. Essential for the maintenance of cellular ATP levels and carbohydrate metabolism. This is Glyceraldehyde-3-phosphate dehydrogenase from Atriplex nummularia (Old man saltbush).